The sequence spans 311 residues: Ornithine carbamoyltransferase (311 aa).

Residues glutamine 85, arginine 109, and 136-139 (HPCQ) each bind carbamoyl phosphate. L-ornithine is bound by residues asparagine 167, aspartate 231, and 235–236 (SM). Carbamoyl phosphate-binding positions include 271–272 (CL) and arginine 299.

It belongs to the aspartate/ornithine carbamoyltransferase superfamily. OTCase family.

It is found in the cytoplasm. It carries out the reaction carbamoyl phosphate + L-ornithine = L-citrulline + phosphate + H(+). The protein operates within amino-acid biosynthesis; L-arginine biosynthesis; L-arginine from L-ornithine and carbamoyl phosphate: step 1/3. In terms of biological role, reversibly catalyzes the transfer of the carbamoyl group from carbamoyl phosphate (CP) to the N(epsilon) atom of ornithine (ORN) to produce L-citrulline. This chain is Ornithine carbamoyltransferase (argF), found in Geobacillus stearothermophilus (Bacillus stearothermophilus).